A 454-amino-acid chain; its full sequence is Glutamine synthetase (454 aa).

The region spanning 19–111 (NNVKFIRFQF…VICDVYKDEK (93 aa)) is the GS beta-grasp domain. Residues 118 to 454 (PRSRLKAILE…DWETGKYLIY (337 aa)) form the GS catalytic domain. Residues glutamate 142 and glutamate 144 each contribute to the Mg(2+) site. Residue glutamate 194 coordinates ATP. 2 residues coordinate Mg(2+): glutamate 199 and glutamate 206. L-glutamate contacts are provided by residues 250–251 (NG) and glycine 251. Histidine 255 lines the Mg(2+) pocket. ATP is bound by residues 257-259 (HQS) and serine 259. L-glutamate contacts are provided by arginine 309, glutamate 315, and arginine 327. ATP contacts are provided by arginine 327, arginine 332, and lysine 339. A Mg(2+)-binding site is contributed by glutamate 344. Arginine 346 lines the L-glutamate pocket.

This sequence belongs to the glutamine synthetase family. In terms of assembly, oligomer of 12 subunits arranged in the form of two hexagons. It depends on Mg(2+) as a cofactor.

The protein localises to the cytoplasm. It catalyses the reaction L-glutamate + NH4(+) + ATP = L-glutamine + ADP + phosphate + H(+). With respect to regulation, feedback inhibited by glycine and alanine, and inhibited by low concentrations of methionine sulfoximine. Its function is as follows. Probably involved in nitrogen metabolism via ammonium assimilation. Catalyzes the ATP-dependent biosynthesis of glutamine from glutamate and ammonia. Beta-glutamate is a much poorer substrate than alpha-glutamate. The chain is Glutamine synthetase from Methanocaldococcus jannaschii (strain ATCC 43067 / DSM 2661 / JAL-1 / JCM 10045 / NBRC 100440) (Methanococcus jannaschii).